The primary structure comprises 255 residues: 5-oxoprolinase subunit A (255 aa).

Belongs to the LamB/PxpA family. As to quaternary structure, forms a complex composed of PxpA, PxpB and PxpC.

The enzyme catalyses 5-oxo-L-proline + ATP + 2 H2O = L-glutamate + ADP + phosphate + H(+). Functionally, catalyzes the cleavage of 5-oxoproline to form L-glutamate coupled to the hydrolysis of ATP to ADP and inorganic phosphate. The polypeptide is 5-oxoprolinase subunit A (Pyrococcus abyssi (strain GE5 / Orsay)).